The chain runs to 132 residues: MTMTDPVADMLTRLRNANSAHHDTVSMPHSKLKSHIADILKSEGFIAGWDVADARVGQTLTLSLKFGPDRERSIRGIKRVSKPGLRVYAKSAEIPQVLGGLGVAILSTSSGLLTDRQAAKKGVGGEVLAYVW.

The protein belongs to the universal ribosomal protein uS8 family. Part of the 30S ribosomal subunit. Contacts proteins S5 and S12.

Functionally, one of the primary rRNA binding proteins, it binds directly to 16S rRNA central domain where it helps coordinate assembly of the platform of the 30S subunit. The chain is Small ribosomal subunit protein uS8 from Clavibacter michiganensis subsp. michiganensis (strain NCPPB 382).